Reading from the N-terminus, the 493-residue chain is GTPase Der (493 aa).

EngA-type G domains are found at residues 3 to 166 and 206 to 379; these read PVVA…AEAL and IKLA…KSAT. Residues 9–16, 56–60, 118–121, 212–219, 259–263, and 324–327 contribute to the GTP site; these read GRPNVGKS, DTGGI, NKVD, DTAGV, and NKWD. In terms of domain architecture, KH-like spans 380-464; the sequence is TRVGTSVLTR…PIRIQFQNSE (85 aa).

The protein belongs to the TRAFAC class TrmE-Era-EngA-EngB-Septin-like GTPase superfamily. EngA (Der) GTPase family. Associates with the 50S ribosomal subunit.

Its function is as follows. GTPase that plays an essential role in the late steps of ribosome biogenesis. In Vibrio atlanticus (strain LGP32) (Vibrio splendidus (strain Mel32)), this protein is GTPase Der.